Consider the following 307-residue polypeptide: Protoheme IX farnesyltransferase (307 aa).

The next 9 membrane-spanning stretches (helical) occupy residues 31 to 51, 52 to 72, 102 to 119, 123 to 145, 151 to 171, 179 to 199, 225 to 245, 247 to 267, and 281 to 301; these read VMSL…YSVH, PFIA…AGAI, ALSF…FMAL, LLAS…IWLK, NIVI…AAVS, VILF…LALF, ILIY…IGMS, FIYL…AGSL, and FVYS…TNTI.

Belongs to the UbiA prenyltransferase family. Protoheme IX farnesyltransferase subfamily.

It is found in the cell inner membrane. The enzyme catalyses heme b + (2E,6E)-farnesyl diphosphate + H2O = Fe(II)-heme o + diphosphate. It participates in porphyrin-containing compound metabolism; heme O biosynthesis; heme O from protoheme: step 1/1. Converts heme B (protoheme IX) to heme O by substitution of the vinyl group on carbon 2 of heme B porphyrin ring with a hydroxyethyl farnesyl side group. The chain is Protoheme IX farnesyltransferase from Rickettsia canadensis (strain McKiel).